The chain runs to 61 residues: Probable tautomerase SMU_1087 (61 aa).

The active-site Proton acceptor; via imino nitrogen is the P2.

It belongs to the 4-oxalocrotonate tautomerase family.

This chain is Probable tautomerase SMU_1087, found in Streptococcus mutans serotype c (strain ATCC 700610 / UA159).